We begin with the raw amino-acid sequence, 83 residues long: Late seed maturation protein P8B6 (83 aa).

Composition is skewed to basic and acidic residues over residues M1–E18 and A37–L51. Positions M1–T83 are disordered. The span at E73–T83 shows a compositional bias: acidic residues.

It belongs to the small hydrophilic plant seed protein family.

Its subcellular location is the cytoplasm. Its function is as follows. This protein may play a role in equipping the seed for survival, maintaining a minimal level of hydration in the dry organism and preventing the denaturation of cytoplasmic components, or may play a role during imbibition by controlling water uptake. The protein is Late seed maturation protein P8B6 of Raphanus sativus (Radish).